The primary structure comprises 528 residues: Equilibrative nucleoside transporter 4 (528 aa).

At 1–68 (MGSIGSQRLK…EEPVPDDRYH (68 aa)) the chain is on the extracellular side. A helical membrane pass occupies residues 69 to 89 (AIYFAMLLAGVGFLLPYNSFI). Residues 90–101 (TDVDYLHHKYPG) are Cytoplasmic-facing. Residues 102 to 122 (TSIVFDMSLTYILVALAAVLL) traverse the membrane as a helical segment. Topologically, residues 123 to 139 (NNVVVERLNLHTRITTG) are extracellular. A helical membrane pass occupies residues 140–160 (YLLALGPLLFISICDVWLQLF). Topologically, residues 161–166 (SHDQAY) are cytoplasmic. Residues 167–187 (AINLAAVGTVAFGCTVQQSSF) traverse the membrane as a helical segment. The Extracellular portion of the chain corresponds to 188–231 (YGYTGLLPKRYTQGVMTGESTAGVMISLSRILTKLLLPDERAST). A helical transmembrane segment spans residues 232-252 (IIFFLVSAGLELLCFLLHLLV). At 253 to 346 (RRSRFVLYYT…LLLHRYVVAR (94 aa)) the chain is on the cytoplasmic side. Residues 347–367 (VIWADMLSIAVTYFITLCLFP) form a helical membrane-spanning segment. At 368–376 (GLESEIRHC) the chain is on the extracellular side. Residues 377–397 (VLGEWLPILVMAVFNLSDFVG) traverse the membrane as a helical segment. Over 398 to 411 (KILAALPVEWRGTH) the chain is Cytoplasmic. Residues 412–432 (LLACSCLRVVFIPLFILCVYP) form a helical membrane-spanning segment. Residues 433 to 445 (SGMPALRHPAWPC) lie on the Extracellular side of the membrane. A helical transmembrane segment spans residues 446–466 (VFSLLMGISNGYFGSVPMILA). Residues 467-481 (AGKVSPKQRELAGNT) lie on the Cytoplasmic side of the membrane. A helical membrane pass occupies residues 482–504 (MTVSYMSGLTLGSAVAYCTYSLT). At 505 to 528 (RDAHGSCFQTATAAAANDSIPVGP) the chain is on the extracellular side. An N-linked (GlcNAc...) asparagine glycan is attached at Asn-521.

This sequence belongs to the SLC29A/ENT transporter (TC 2.A.57) family. In terms of processing, N-glycosylated. As to expression, expressed in heart. Expressed in choroid plexus.

It is found in the cell membrane. The protein localises to the apical cell membrane. The enzyme catalyses serotonin(out) = serotonin(in). It carries out the reaction dopamine(out) = dopamine(in). It catalyses the reaction (R)-noradrenaline(out) = (R)-noradrenaline(in). The catalysed reaction is (R)-adrenaline(out) = (R)-adrenaline(in). The enzyme catalyses histamine(out) = histamine(in). It carries out the reaction tyramine(in) = tyramine(out). It catalyses the reaction guanidine(out) = guanidine(in). The catalysed reaction is adenine(out) = adenine(in). The enzyme catalyses adenosine(in) = adenosine(out). Its activity is regulated as follows. Activated at acidic pH. Electrogenic voltage-dependent transporter that mediates the transport of a variety of endogenous bioactive amines, cationic xenobiotics and drugs. Utilizes the physiologic inside-negative membrane potential as a driving force to facilitate cellular uptake of organic cations. Functions as a Na(+)- and Cl(-)-independent bidirectional transporter. Substrate transport is pH-dependent and enhanced under acidic condition, which is most likely the result of allosteric changes in the transporter structure. Implicated in monoamine neurotransmitters uptake such as serotonin, dopamine, adrenaline/epinephrine, noradrenaline/norepinephrine, histamine and tyramine, thereby supporting a role in homeostatic regulation of aminergic neurotransmission in the central nervous system. Also responsible for the uptake of bioactive amines and drugs through the blood-cerebrospinal fluid (CSF) barrier, from the CSF into choroid plexus epithelial cells, thereby playing a significant role in the clearance of cationic neurotoxins, xenobiotics and metabolic waste in the brain. Involved in bidirectional transport of the purine nucleoside adenosine and plays a role in the regulation of extracellular adenosine concentrations in cardiac tissues, in particular during ischemia. May be involved in organic cation uptake from the tubular lumen into renal tubular cells, thereby contributing to organic cation reabsorption in the kidney. Also transports adenine and guanidine. The chain is Equilibrative nucleoside transporter 4 from Mus musculus (Mouse).